Consider the following 202-residue polypeptide: Pyridoxal 5'-phosphate synthase subunit PdxT (202 aa).

Residue 52 to 54 (GES) participates in L-glutamine binding. Cys-84 (nucleophile) is an active-site residue. L-glutamine-binding positions include Arg-120 and 148–149 (IR). Catalysis depends on charge relay system residues His-185 and Glu-187.

The protein belongs to the glutaminase PdxT/SNO family. In the presence of PdxS, forms a dodecamer of heterodimers. Only shows activity in the heterodimer.

It carries out the reaction aldehydo-D-ribose 5-phosphate + D-glyceraldehyde 3-phosphate + L-glutamine = pyridoxal 5'-phosphate + L-glutamate + phosphate + 3 H2O + H(+). It catalyses the reaction L-glutamine + H2O = L-glutamate + NH4(+). Its pathway is cofactor biosynthesis; pyridoxal 5'-phosphate biosynthesis. Functionally, catalyzes the hydrolysis of glutamine to glutamate and ammonia as part of the biosynthesis of pyridoxal 5'-phosphate. The resulting ammonia molecule is channeled to the active site of PdxS. The protein is Pyridoxal 5'-phosphate synthase subunit PdxT of Methanopyrus kandleri (strain AV19 / DSM 6324 / JCM 9639 / NBRC 100938).